Here is a 233-residue protein sequence, read N- to C-terminus: 2,3,4,5-tetrahydropyridine-2,6-dicarboxylate N-acetyltransferase (233 aa).

The protein belongs to the transferase hexapeptide repeat family. DapH subfamily.

It catalyses the reaction (S)-2,3,4,5-tetrahydrodipicolinate + acetyl-CoA + H2O = L-2-acetamido-6-oxoheptanedioate + CoA. Its pathway is amino-acid biosynthesis; L-lysine biosynthesis via DAP pathway; LL-2,6-diaminopimelate from (S)-tetrahydrodipicolinate (acetylase route): step 1/3. Catalyzes the transfer of an acetyl group from acetyl-CoA to tetrahydrodipicolinate. The protein is 2,3,4,5-tetrahydropyridine-2,6-dicarboxylate N-acetyltransferase of Thermosipho africanus (strain TCF52B).